The primary structure comprises 125 residues: Neuropeptide B (125 aa).

Positions 1 to 24 (MARSATLAAAALALCLLLAPPGLA) are cleaved as a signal peptide. The interval 54–73 (RRSQPYRGAEPPGGAGASPE) is disordered. A propeptide spanning residues 56–125 (SQPYRGAEPP…SLRAADCLAA (70 aa)) is cleaved from the precursor.

Belongs to the neuropeptide B/W family. Widely expressed in the central nervous system. High levels are found in substantia nigra, hypothalamus, hippocampus, spinal cord, placenta and fetal brain; lower levels are found in testis, uterus and ovary. Also detected at high levels in colorectal adenocarcinoma.

The protein resides in the secreted. May be involved in the regulation of feeding, neuroendocrine system, memory, learning and in the afferent pain pathway. This Homo sapiens (Human) protein is Neuropeptide B (NPB).